The sequence spans 393 residues: METFLFTSESVNEGHPDKLCDQISDAVLDACLEQDPDSKVACETCTKTNMVMVFGEITTKATVDYEKIVRDTCRAIGFVSDDVGLDADKCKVLVNIEQQSPDIAQGVHGHFTKCPEEIGAGDQGHMFGYATDETPELMPLSHVLATKLGARLTEVRKNGTCAWLRPDGKTQVTVEYYNDKGAMVPIRVHTVLISTQHDETVTNDEIARDLKEHVIKPVIPEKYLDEKTIFHLNPSGRFVIGGPHGDAGLTGRKIIIDTYGGWGAHGGGAFSGKDPTKVDRSGAYIVRQAAKSVVANGMARRALVQVSYAIGVPEPLSVFVDTYETGLIPDKEILKIVKESFDFRPGMMTINLDLKRGGNGRFLKTAAYGHFGRDDPDFTWEVVKPLKWDKPQA.

Residue glutamate 9 coordinates Mg(2+). Histidine 15 is a binding site for ATP. Glutamate 43 is a binding site for K(+). Residues glutamate 56 and glutamine 99 each coordinate L-methionine. At cysteine 114 the chain carries S-nitrosocysteine. ATP contacts are provided by residues 167 to 169, 235 to 238, aspartate 246, 252 to 253, alanine 269, lysine 273, and lysine 277; these read DGK, SGRF, and RK. Aspartate 246 is an L-methionine binding site. Lysine 277 contributes to the L-methionine binding site.

This sequence belongs to the AdoMet synthase family. In terms of assembly, homotetramer. Interacts with GRF3. Mn(2+) serves as cofactor. Requires Mg(2+) as cofactor. It depends on Co(2+) as a cofactor. The cofactor is K(+). Post-translationally, S-nitrosylated in the presence of NO. The inhibition of SAM1 activity by S-nitrosylation could contribute to the cross-talk between ethylene and NO signaling. As to expression, highly expressed in stems and roots.

Its subcellular location is the cytoplasm. The enzyme catalyses L-methionine + ATP + H2O = S-adenosyl-L-methionine + phosphate + diphosphate. It functions in the pathway amino-acid biosynthesis; S-adenosyl-L-methionine biosynthesis; S-adenosyl-L-methionine from L-methionine: step 1/1. With respect to regulation, reversibly inhibited by NO. Inhibited by 5,5'-dithiobis-2-nitrobenzoic acid (DTNB) and N-ethylmaleimide (NEM) (in vitro). Its function is as follows. Catalyzes the formation of S-adenosylmethionine from methionine and ATP. The reaction comprises two steps that are both catalyzed by the same enzyme: formation of S-adenosylmethionine (AdoMet) and triphosphate, and subsequent hydrolysis of the triphosphate. This is S-adenosylmethionine synthase 1 (SAM1) from Arabidopsis thaliana (Mouse-ear cress).